The chain runs to 91 residues: Small ribosomal subunit protein uS19 (91 aa).

Belongs to the universal ribosomal protein uS19 family.

Its function is as follows. Protein S19 forms a complex with S13 that binds strongly to the 16S ribosomal RNA. The sequence is that of Small ribosomal subunit protein uS19 from Prochlorococcus marinus (strain MIT 9211).